A 370-amino-acid polypeptide reads, in one-letter code: MVQASMRSPNMETFKQQKVEDFYDIGEELGSGQFAIVKKCREKSTGLEYAAKFIKKRQSRASRRGVCREEIEREVSILRQVLHPNIITLHDVYENRTDVVLILELVSGGELFDFLAQKESLSEEEATSFIKQILDGVNYLHTKKIAHFDLKPENIMLLDKNIPIPHIKLIDFGLAHEIEDGVEFKNIFGTPEFVAPEIVNYEPLGLEADMWSIGVITYILLSGASPFLGDTKQETLANITAVSYDFDEEFFSQTSELAKDFIRKLLVKETRKRLTIQEALRHPWITPVDTQQAMVRRESVVNLENFKKQYVRRRWKLSFSIVSLCNHLTRSLMKKVHLRTSEDLRNCESDTEENIARRKALHPRRRSSTS.

The Protein kinase domain maps to 23–285; it reads YDIGEELGSG…IQEALRHPWI (263 aa). Residues 29-37 and K52 contribute to the ATP site; that span reads LGSGQFAIV. D149 (proton acceptor) is an active-site residue. The segment at 287 to 354 is calmodulin-binding; the sequence is PVDTQQAMVR…RNCESDTEEN (68 aa). Residues 292–301 are autoinhibitory domain; that stretch reads QAMVRRESVV. Residue S299 is modified to Phosphoserine. The residue at position 318 (S318) is a Phosphoserine; by autocatalysis. Phosphoserine is present on S349. T369 bears the Phosphothreonine mark.

Belongs to the protein kinase superfamily. CAMK Ser/Thr protein kinase family. DAP kinase subfamily. As to quaternary structure, homodimer in its autoinhibited state. Active as monomer. Interacts with 14-3-3 proteins YWHAB, YWHAE, YWHAG, YWHAH, YWHAQ, YWHAZ and SFN; the interaction requires DAPK2 phosphorylation at Thr-369 and suppresses DAPK2 kinase activity and DAPK2-induced apoptosis. Requires Mg(2+) as cofactor. In terms of processing, autophosphorylation at Ser-318 inhibits its catalytic activity. Dephosphorylated at Ser-318 in response to activated Fas and TNF-alpha receptors. In terms of tissue distribution, expressed in peritubular interstitial cells of the renal cortex. Isoform 1 is found in the adult brain while isoform 2 is expressed in brains of embryos and young mice (at protein level).

The protein localises to the cytoplasm. It localises to the cytoplasmic vesicle. Its subcellular location is the autophagosome lumen. The catalysed reaction is L-seryl-[protein] + ATP = O-phospho-L-seryl-[protein] + ADP + H(+). The enzyme catalyses L-threonyl-[protein] + ATP = O-phospho-L-threonyl-[protein] + ADP + H(+). Its activity is regulated as follows. Activated by Ca(2+)/calmodulin. Regulated by a double locking mechanism, involving autophosphorylation at Ser-318, calmodulin binding, and dimerization. In the inactive state, Ser-318 is phosphorylated, and the kinase is dimeric. Activation involves: dephosphorylation at Ser-318, release-of-autoinhibition mechanism where calmodulin binding induces a conformational change that relieves the steric block of the active site by the autoinhibitory domain, and generation of the monomeric active form of the kinase. Its function is as follows. Calcium/calmodulin-dependent serine/threonine kinase involved in multiple cellular signaling pathways that trigger cell survival, apoptosis, and autophagy. Capable of regulating both type I apoptotic and type II autophagic cell death signals. The former involves caspase activation, chromatin and mitochondrial condensation while the latter involves caspase-independent cell death in conjunction with accumulation of mature autophagic vesicles, plasma membrane blebs, and nuclear condensation without DNA degradation. Mediator of anoikis and a suppressor of beta-catenin-dependent anchorage-independent growth of malignant epithelial cells. May play a role in granulocytic maturation. Regulates granulocytes motility by controlling cell spreading and polarization. In Mus musculus (Mouse), this protein is Death-associated protein kinase 2 (Dapk2).